The following is a 374-amino-acid chain: tRNA-specific 2-thiouridylase MnmA (374 aa).

ATP is bound by residues 12 to 19 (GMSGGVDS) and Met38. The interval 98 to 100 (NPD) is interaction with target base in tRNA. The active-site Nucleophile is Cys103. Cys103 and Cys202 are joined by a disulfide. ATP is bound at residue Gly128. The interval 152–154 (KDQ) is interaction with tRNA. Cys202 serves as the catalytic Cysteine persulfide intermediate. An interaction with tRNA region spans residues 316–317 (RY).

This sequence belongs to the MnmA/TRMU family.

It localises to the cytoplasm. It carries out the reaction S-sulfanyl-L-cysteinyl-[protein] + uridine(34) in tRNA + AH2 + ATP = 2-thiouridine(34) in tRNA + L-cysteinyl-[protein] + A + AMP + diphosphate + H(+). In terms of biological role, catalyzes the 2-thiolation of uridine at the wobble position (U34) of tRNA, leading to the formation of s(2)U34. This chain is tRNA-specific 2-thiouridylase MnmA, found in Vibrio campbellii (strain ATCC BAA-1116).